A 139-amino-acid polypeptide reads, in one-letter code: D-ribose pyranase (139 aa).

The Proton donor role is filled by H20. Substrate-binding positions include D28, H106, and 128 to 130; that span reads YAN.

It belongs to the RbsD / FucU family. RbsD subfamily. Homodecamer.

The protein localises to the cytoplasm. It carries out the reaction beta-D-ribopyranose = beta-D-ribofuranose. It participates in carbohydrate metabolism; D-ribose degradation; D-ribose 5-phosphate from beta-D-ribopyranose: step 1/2. Functionally, catalyzes the interconversion of beta-pyran and beta-furan forms of D-ribose. This Cronobacter sakazakii (strain ATCC BAA-894) (Enterobacter sakazakii) protein is D-ribose pyranase.